Consider the following 294-residue polypeptide: Xyloglucan endotransglucosylase protein 34 (294 aa).

The signal sequence occupies residues 1-22 (MAAAYPWTLFLGMLVMVSGTMG). The GH16 domain maps to 23–221 (AALRKPVDVA…WSKAPFIASY (199 aa)). Glutamate 107 acts as the Nucleophile in catalysis. Glutamate 111 serves as the catalytic Proton donor. Residue glutamate 111 coordinates xyloglucan. An N-linked (GlcNAc...) asparagine glycan is attached at asparagine 115. Residues 124 to 126 (QTN), 134 to 136 (DRE), 200 to 201 (DW), and glycine 205 contribute to the xyloglucan site. 2 disulfide bridges follow: cysteine 229–cysteine 238 and cysteine 275–cysteine 288. Xyloglucan is bound at residue arginine 280.

The protein belongs to the glycosyl hydrolase 16 family. XTH group 1 subfamily. Post-translationally, contains at least one intrachain disulfide bond essential for its enzymatic activity. In terms of processing, N-glycosylated. Contains N-acetylglucosamine and mannose. Glycosylation is not essential for its catalytic activity. As to expression, expressed in mature gelatinous (G) cell wall layer of the tension wood fibers. Highly expressed in the outer zone of the G layer close to the secondary S2 layer. Not expressed in the mature walls of the ray cells or vessel elements (at protein level). Highest expression in both the phloem/cambium and differentiating xylem of the mature stem containing primarily secondary cell wall forming cells, in root tips and young roots. Expressed at low levels in apical bud.

The protein resides in the secreted. The protein localises to the cell wall. Its subcellular location is the extracellular space. It localises to the apoplast. It is found in the cytoplasm. The enzyme catalyses breaks a beta-(1-&gt;4) bond in the backbone of a xyloglucan and transfers the xyloglucanyl segment on to O-4 of the non-reducing terminal glucose residue of an acceptor, which can be a xyloglucan or an oligosaccharide of xyloglucan.. Functionally, catalyzes xyloglucan endotransglycosylation (XET). Cleaves and religates xyloglucan polymers. Does not catalyze xyloglucan endohydrolysis (XEH). Involved in early phases of secondary (S) cell wall formation in fibers of the xylem and phloem vascular tissues of wood stems. May play a role in restructuring primary cell walls, possibly creating and reinforcing the connections between the primary and S cell wall layers. Functions in the gelatinous (G) layers of the tension wood fibers that are involved in bending of the wood stems. May play a role in G fiber shrinking by repairing broken xyloglucan cross-links between G and S2 cell wall layers via its XET activity to maintain connections between the layers. This Populus tremula x Populus tremuloides (Hybrid aspen) protein is Xyloglucan endotransglucosylase protein 34.